The chain runs to 373 residues: Homoserine O-acetyltransferase (373 aa).

The region spanning 46–355 (NAILICHPLT…NPNGHDSFLL (310 aa)) is the AB hydrolase-1 domain. Serine 151 acts as the Nucleophile in catalysis. Substrate is bound at residue arginine 221. Active-site residues include aspartate 317 and histidine 350. A substrate-binding site is contributed by aspartate 351.

This sequence belongs to the AB hydrolase superfamily. MetX family. Homodimer.

It is found in the cytoplasm. It catalyses the reaction L-homoserine + acetyl-CoA = O-acetyl-L-homoserine + CoA. It functions in the pathway amino-acid biosynthesis; L-methionine biosynthesis via de novo pathway; O-acetyl-L-homoserine from L-homoserine: step 1/1. Its function is as follows. Transfers an acetyl group from acetyl-CoA to L-homoserine, forming acetyl-L-homoserine. This is Homoserine O-acetyltransferase from Zymomonas mobilis subsp. mobilis (strain ATCC 31821 / ZM4 / CP4).